We begin with the raw amino-acid sequence, 147 residues long: Peptide methionine sulfoxide reductase MsrB (147 aa).

Residues 8–131 (KEELKKVLTE…NSASLKFIPK (124 aa)) form the MsrB domain. Cysteine 120 (nucleophile) is an active-site residue.

It belongs to the MsrB Met sulfoxide reductase family.

The catalysed reaction is L-methionyl-[protein] + [thioredoxin]-disulfide + H2O = L-methionyl-(R)-S-oxide-[protein] + [thioredoxin]-dithiol. In Clostridium perfringens (strain ATCC 13124 / DSM 756 / JCM 1290 / NCIMB 6125 / NCTC 8237 / Type A), this protein is Peptide methionine sulfoxide reductase MsrB.